A 441-amino-acid chain; its full sequence is Enolase (441 aa).

A (2R)-2-phosphoglycerate-binding site is contributed by Q164. E206 serves as the catalytic Proton donor. Residues D243, E289, and D316 each contribute to the Mg(2+) site. (2R)-2-phosphoglycerate contacts are provided by K341, R370, S371, and K392. K341 (proton acceptor) is an active-site residue.

It belongs to the enolase family. Mg(2+) is required as a cofactor.

The protein resides in the cytoplasm. It localises to the secreted. It is found in the cell surface. The catalysed reaction is (2R)-2-phosphoglycerate = phosphoenolpyruvate + H2O. The protein operates within carbohydrate degradation; glycolysis; pyruvate from D-glyceraldehyde 3-phosphate: step 4/5. Functionally, catalyzes the reversible conversion of 2-phosphoglycerate (2-PG) into phosphoenolpyruvate (PEP). It is essential for the degradation of carbohydrates via glycolysis. The polypeptide is Enolase (Leuconostoc citreum (strain KM20)).